Reading from the N-terminus, the 605-residue chain is Aspartate--tRNA(Asp/Asn) ligase (605 aa).

Glu172 serves as a coordination point for L-aspartate. The tract at residues 196-199 is aspartate; the sequence is QLFK. Arg218 lines the L-aspartate pocket. Residues 218 to 220 and Gln227 each bind ATP; that span reads RDE. His455 contributes to the L-aspartate binding site. Glu489 contributes to the ATP binding site. Arg496 provides a ligand contact to L-aspartate. 541-544 serves as a coordination point for ATP; that stretch reads GLDR.

The protein belongs to the class-II aminoacyl-tRNA synthetase family. Type 1 subfamily. In terms of assembly, homodimer.

The protein resides in the cytoplasm. The catalysed reaction is tRNA(Asx) + L-aspartate + ATP = L-aspartyl-tRNA(Asx) + AMP + diphosphate. Its function is as follows. Aspartyl-tRNA synthetase with relaxed tRNA specificity since it is able to aspartylate not only its cognate tRNA(Asp) but also tRNA(Asn). Reaction proceeds in two steps: L-aspartate is first activated by ATP to form Asp-AMP and then transferred to the acceptor end of tRNA(Asp/Asn). The protein is Aspartate--tRNA(Asp/Asn) ligase of Ralstonia nicotianae (strain ATCC BAA-1114 / GMI1000) (Ralstonia solanacearum).